A 530-amino-acid chain; its full sequence is MEDDSLYLGGEWQFNHFSKLTSSRPDAAFAEIQRTSLPEKSPLSCETRVDLCDDLAPVARQLAPREKPPLSSRRPAAVGAGLQNMGNTCYVNASLQCLTYKPPLANYMLFREHSQTCHRHKGCMLCTMQAHITRALHIPGHVIQPSQALAAGFHRGKQEDAHEFLMFTVDAMRKACLPGHKQVDRHSKDTTLIHQIFGGYWRSQIKCLHCHGISDTFDPYLDIALDIQAAQSVQQALEQLVKPEELNGENAYHCGVCLQRAPASKTLTLHNSAKVLILVLKRFPDVTGNKIAKNVQYPECLDMQPYMSQQNTGPLVYVLYAVLVHAGWSCHNGHYSSYVKAQEGQWYKMDDAEVTASSITSVLSQQAYVLFYIQKSEWERHSESVSRGREPRALGVEDTDRRATQGELKRDHPCLQAPELDEHLVERATQESTLDHWKFLQEQNKTKPEFNVRRVEGTVPPDVLVIHQSKYKCRMKNHHPEQQSSLLNLSSTTPTDQESMNTGTLASLRGRTRRSKGKNKHSKRALLVCQ.

The USP domain occupies 80–375 (AGLQNMGNTC…QAYVLFYIQK (296 aa)). The Nucleophile role is filled by Cys89. Catalysis depends on His334, which acts as the Proton acceptor. Composition is skewed to basic and acidic residues over residues 382–392 (SESVSRGREPR) and 398–410 (DTDR…ELKR). Disordered stretches follow at residues 382–410 (SESV…ELKR) and 477–530 (NHHP…LVCQ). Over residues 484 to 495 (SSLLNLSSTTPT) the composition is skewed to low complexity. Over residues 496 to 505 (DQESMNTGTL) the composition is skewed to polar residues. Basic residues predominate over residues 510–524 (GRTRRSKGKNKHSKR).

It belongs to the peptidase C19 family. USP17 subfamily.

Its subcellular location is the nucleus. It localises to the endoplasmic reticulum. It carries out the reaction Thiol-dependent hydrolysis of ester, thioester, amide, peptide and isopeptide bonds formed by the C-terminal Gly of ubiquitin (a 76-residue protein attached to proteins as an intracellular targeting signal).. In terms of biological role, deubiquitinating enzyme that removes conjugated ubiquitin from specific proteins to regulate different cellular processes that may include cell proliferation, progression through the cell cycle, apoptosis, cell migration, and the cellular response to viral infection. The protein is Ubiquitin carboxyl-terminal hydrolase 17-like protein 10 (USP17L10) of Homo sapiens (Human).